Here is a 475-residue protein sequence, read N- to C-terminus: MAPKTETKAGAGFKAGVKDYRLTYYTPDYQVKDTDILAAFRMTPQPGVPPEECGAAVAAESSTGTWTTVWTDGLTSLDRYKGRCYDLEPVKGEENQYIAYVAYPLDLFEEGSVTNLFTSIVGNVFGFKALRALRLEDLRISVAYAKTFQGPPHGIEVERDKLNKYGRPLLGCTIKPKLGLSAKNYGRAVYECLRGGLDFTKDDENVNSQPFMRWRDRFLFVAEAIYKSQAETGEIKGHYLNATAATCEAMLQRAQCAKELGVPIIMHDYLTGGWTANTSLAHYCRDHGLLLHIHRAMHAVIDRQKNHGMHFRVLAKSLRMSGGDHLHSGTVVGKLEGEREVTLGFVDLMRDDFIEKDRARGIYFTQDWVLLPGVMPVASGGIHVWHMPALVEIFGDDACLQFGGGTLGHPWGNAPGAAANRIACEACVQARNEGRHLAREGGDVIRAACKWSPELAAACEVWKEIKFEFETIDTL.

Residues M1–A2 constitute a propeptide that is removed on maturation. An N-acetylproline modification is found at P3. Position 14 is an N6,N6,N6-trimethyllysine (K14). Positions 123 and 173 each coordinate substrate. K175 acts as the Proton acceptor in catalysis. K177 is a substrate binding site. Mg(2+) is bound by residues K201, D203, and E204. K201 bears the N6-carboxylysine mark. H294 (proton acceptor) is an active-site residue. The substrate site is built by R295, H327, and S379.

The protein belongs to the RuBisCO large chain family. Type I subfamily. Heterohexadecamer of 8 large chains and 8 small chains; disulfide-linked. The disulfide link is formed within the large subunit homodimers. Mg(2+) serves as cofactor. Post-translationally, the disulfide bond which can form in the large chain dimeric partners within the hexadecamer appears to be associated with oxidative stress and protein turnover.

The protein localises to the plastid. Its subcellular location is the chloroplast. The catalysed reaction is 2 (2R)-3-phosphoglycerate + 2 H(+) = D-ribulose 1,5-bisphosphate + CO2 + H2O. It catalyses the reaction D-ribulose 1,5-bisphosphate + O2 = 2-phosphoglycolate + (2R)-3-phosphoglycerate + 2 H(+). RuBisCO catalyzes two reactions: the carboxylation of D-ribulose 1,5-bisphosphate, the primary event in carbon dioxide fixation, as well as the oxidative fragmentation of the pentose substrate in the photorespiration process. Both reactions occur simultaneously and in competition at the same active site. The chain is Ribulose bisphosphate carboxylase large chain from Bryopsis maxima (Green alga).